Reading from the N-terminus, the 370-residue chain is Ubiquinone biosynthesis O-methyltransferase, mitochondrial (370 aa).

Residues 1 to 86 constitute a mitochondrion transit peptide; that stretch reads MWRGGRLGSR…TYRTPWKRLY (86 aa). Arginine 125 serves as a coordination point for S-adenosyl-L-methionine. An N6-acetyllysine mark is found at lysine 144 and lysine 150. Glycine 155 and aspartate 176 together coordinate S-adenosyl-L-methionine. Position 197 is an N6-acetyllysine (lysine 197). Serine 223 provides a ligand contact to S-adenosyl-L-methionine. Mg(2+) contacts are provided by glutamate 224, glutamate 227, and histidine 228. A disordered region spans residues 336-370; that stretch reads AQEHQEPAESALKGETGALHANTSGSPSVREEQRT.

This sequence belongs to the class I-like SAM-binding methyltransferase superfamily. UbiG/COQ3 family. In terms of assembly, component of a multi-subunit COQ enzyme complex, composed of at least COQ3, COQ4, COQ5, COQ6, COQ7 and COQ9. Mg(2+) serves as cofactor.

It is found in the mitochondrion inner membrane. The catalysed reaction is 3,4-dihydroxy-5-(all-trans-decaprenyl)benzoate + S-adenosyl-L-methionine = 4-hydroxy-3-methoxy-5-(all-trans-decaprenyl)benzoate + S-adenosyl-L-homocysteine + H(+). The enzyme catalyses a 3-demethylubiquinone + S-adenosyl-L-methionine = a ubiquinone + S-adenosyl-L-homocysteine. It carries out the reaction 3-demethylubiquinol-10 + S-adenosyl-L-methionine = ubiquinol-10 + S-adenosyl-L-homocysteine + H(+). Its pathway is cofactor biosynthesis; ubiquinone biosynthesis. Functionally, O-methyltransferase required for two non-consecutive steps during ubiquinone biosynthesis. Catalyzes the 2 O-methylation of 3,4-dihydroxy-5-(all-trans-decaprenyl)benzoic acid into 4-hydroxy-3-methoxy-5-(all-trans-decaprenyl)benzoic acid. Also catalyzes the last step of ubiquinone biosynthesis by mediating methylation of 3-demethylubiquinone into ubiquinone. Also able to mediate the methylation of 3-demethylubiquinol-10 into ubiquinol-10. This Mus musculus (Mouse) protein is Ubiquinone biosynthesis O-methyltransferase, mitochondrial.